Reading from the N-terminus, the 162-residue chain is Inorganic pyrophosphatase (162 aa).

E8 contacts Mg(2+). Residues K16, R30, and Y42 each contribute to the substrate site. Positions 52, 57, 84, and 89 each coordinate Mg(2+). D89 acts as the Proton acceptor in catalysis. Y126 contacts substrate.

This sequence belongs to the PPase family. Homohexamer. Requires Mg(2+) as cofactor.

It localises to the cytoplasm. The catalysed reaction is diphosphate + H2O = 2 phosphate + H(+). Catalyzes the hydrolysis of inorganic pyrophosphate (PPi) forming two phosphate ions. The polypeptide is Inorganic pyrophosphatase (Mycobacterium leprae (strain TN)).